The sequence spans 389 residues: 8-amino-7-oxononanoate synthase (389 aa).

Arginine 31 provides a ligand contact to substrate. 109–110 (GY) contributes to the pyridoxal 5'-phosphate binding site. Histidine 134 is a binding site for substrate. Pyridoxal 5'-phosphate-binding positions include serine 180, 205–208 (DEAH), and 236–239 (TLSK). Residue lysine 239 is modified to N6-(pyridoxal phosphate)lysine. Substrate is bound at residue threonine 349.

It belongs to the class-II pyridoxal-phosphate-dependent aminotransferase family. BioF subfamily. As to quaternary structure, homodimer. Pyridoxal 5'-phosphate is required as a cofactor.

It carries out the reaction 6-carboxyhexanoyl-[ACP] + L-alanine + H(+) = (8S)-8-amino-7-oxononanoate + holo-[ACP] + CO2. Its pathway is cofactor biosynthesis; biotin biosynthesis. Catalyzes the decarboxylative condensation of pimeloyl-[acyl-carrier protein] and L-alanine to produce 8-amino-7-oxononanoate (AON), [acyl-carrier protein], and carbon dioxide. The sequence is that of 8-amino-7-oxononanoate synthase from Mycobacterium marinum (strain ATCC BAA-535 / M).